We begin with the raw amino-acid sequence, 533 residues long: DELLA protein 2 (533 aa).

Positions 1–12 (MKREHKLEHEDM) are enriched in basic and acidic residues. Residues 1–24 (MKREHKLEHEDMSSGSGKSGVCWE) are disordered. The short motif at 31–35 (DELLA) is the DELLA motif element. In terms of domain architecture, GRAS spans 157–522 (VETQEKGIRL…RPLIATSAWK (366 aa)). The tract at residues 164 to 218 (IRLVHSLMACAEAVEQNNLKMAEALVKQIGYLAVSQEGAMRKVATYFAEGLARRI) is leucine repeat I (LRI). Residues 166 to 203 (LVHSLMACAEAVEQNNLKMAEALVKQIGYLAVSQEGAM) are required for possible homodimerization. The LxCxE motif; degenerate signature appears at 171 to 175 (MACAE). The tract at residues 232-297 (QIHFYETCPN…GGPPAFRLTG (66 aa)) is VHIID. The short motif at 263 to 267 (VHVID) is the VHIID element. The segment at 311 to 343 (QVGWRLAQFAQTIHVQFEYRGFVANSLADLDAS) is leucine repeat II (LRII). The interval 355–443 (VAVNSVFELH…EVYLGKQICN (89 aa)) is PFYRE. Residues 363–367 (LHKLN) carry the LXXLL motif; degenerate motif. Positions 446-522 (ACEGTDRVER…RPLIATSAWK (77 aa)) are SAW.

The protein belongs to the GRAS family. DELLA subfamily. May be a homodimer. Ubiquitinated. Upon GA application it is ubiquitinated, leading to its subsequent degradation.

It is found in the nucleus. In terms of biological role, probable transcriptional regulator that acts as a repressor of the gibberellin (GA) signaling pathway. Probably acts by participating in large multiprotein complexes that repress transcription of GA-inducible genes. Upon GA application, it is degraded by the proteasome, allowing the GA signaling pathway. Together with DELLA1, required to enable arbuscule development during arbuscular mycorrhizal (AM) symbiosis with AM fungi (e.g. Glomus versiforme) via the regulation of RAM1 which, in turn, regulates various AM genes (e.g. NSP1, NSP2, PT4, LEC5, RAM2, EXO70I, STR and RAD1). This is DELLA protein 2 from Medicago truncatula (Barrel medic).